Reading from the N-terminus, the 328-residue chain is uncharacterized protein (328 aa).

The N-terminal stretch at 1 to 24 (MKSIKGLGKLLLASSILFSSSAFA) is a signal peptide.

Belongs to the bacterial solute-binding protein 7 family.

The protein localises to the periplasm. This is an uncharacterized protein from Haemophilus influenzae (strain ATCC 51907 / DSM 11121 / KW20 / Rd).